The chain runs to 377 residues: MGAGGRMSDPSEGKNILERVPVDPPFTLSDLKKAIPTHCFERSVIRSSYYVVHDLIVAYVFYYLANTYIPLIPTPLAYLAWPVYWFCQASILTGLWVIGHECGHHAFSDYQLIDDIVGFVLHSALLTPYFSWKYSHRNHHANTNSLDNDEVYIPKRKSKVKIYSKLLNNPPGRVFTLVFRLTLGFPLYLLTNISGKKYGRFANHFDPMSPIFNDRERVQVLLSDFGLLAVFYAIKLLVAAKGAAWVINMYAIPVLGVSVFFVLITYLHHTHLSLPHYDSTEWNWIKGALSTIDRDFGFLNRVFHDVTHTHVLHHLISYIPHYHAKEARDAIKPVLGEYYKIDRTPIFKAMYREAKECIYIEPDEDSEHKGVFWYHKM.

2 helical membrane passes run 55 to 75 (LIVA…IPTP) and 79 to 99 (LAWP…WVIG). The Histidine box-1 signature appears at 100–104 (HECGH). A helical transmembrane segment spans residues 112–132 (LIDDIVGFVLHSALLTPYFSW). Positions 136–140 (HRNHH) match the Histidine box-2 motif. Helical transmembrane passes span 174–194 (VFTL…TNIS), 220–240 (VLLS…LVAA), and 244–264 (AWVI…FVLI). The Histidine box-3 motif lies at 310–314 (HVLHH).

This sequence belongs to the fatty acid desaturase type 1 family.

The protein resides in the membrane. It functions in the pathway lipid metabolism; polyunsaturated fatty acid biosynthesis. Its function is as follows. Converts linoleic acid into a conjugated octadecatrienoic acid, probably calendic acid. This is Delta(12) fatty acid desaturase DES8.11 from Calendula officinalis (Pot marigold).